The following is a 129-amino-acid chain: Small ribosomal subunit protein uS11 (129 aa).

This sequence belongs to the universal ribosomal protein uS11 family. Part of the 30S ribosomal subunit. Interacts with proteins S7 and S18. Binds to IF-3.

Located on the platform of the 30S subunit, it bridges several disparate RNA helices of the 16S rRNA. Forms part of the Shine-Dalgarno cleft in the 70S ribosome. This Cereibacter sphaeroides (strain ATCC 17029 / ATH 2.4.9) (Rhodobacter sphaeroides) protein is Small ribosomal subunit protein uS11.